The primary structure comprises 278 residues: Large ribosomal subunit protein uL2 (278 aa).

Residues arginine 222 to arginine 264 are disordered.

Belongs to the universal ribosomal protein uL2 family. Part of the 50S ribosomal subunit. Forms a bridge to the 30S subunit in the 70S ribosome.

In terms of biological role, one of the primary rRNA binding proteins. Required for association of the 30S and 50S subunits to form the 70S ribosome, for tRNA binding and peptide bond formation. It has been suggested to have peptidyltransferase activity; this is somewhat controversial. Makes several contacts with the 16S rRNA in the 70S ribosome. This Methylobacterium radiotolerans (strain ATCC 27329 / DSM 1819 / JCM 2831 / NBRC 15690 / NCIMB 10815 / 0-1) protein is Large ribosomal subunit protein uL2.